The chain runs to 966 residues: Calsyntenin-2 (966 aa).

An N-terminal signal peptide occupies residues 1 to 20 (MLPGRLCLVPLLLALGVGSG). Topologically, residues 21–835 (GGSGDGGDSR…SIQRSSVVPS (815 aa)) are extracellular. 2 consecutive Cadherin domains span residues 46–162 (IETS…APTF) and 163–282 (KEPA…MPLF). Asn-58 and Asn-100 each carry an N-linked (GlcNAc...) asparagine glycan. N-linked (GlcNAc...) asparagine glycans are attached at residues Asn-344, Asn-376, Asn-720, and Asn-733. A helical transmembrane segment spans residues 836-856 (IATVVIIISVCMLVFVVAMGV). Topologically, residues 857–966 (YRVRIAHQHF…NTAGVINIWK (110 aa)) are cytoplasmic. The disordered stretch occupies residues 890–966 (NPMEKHEGPG…NTAGVINIWK (77 aa)). Over residues 901–916 (GEDETTEVEEEEEAEE) the composition is skewed to acidic residues. Residues 943–960 (QSGTSSQSPERSTWNTAG) show a composition bias toward polar residues.

It belongs to the calsyntenin family. Post-translationally, proteolytically processed under normal cellular conditions. A primary zeta-cleavage generates a large extracellular (soluble) N-terminal domain (sAlc) and a short C-terminal transmembrane fragment (CTF1). A secondary cleavage catalyzed by gamma-secretase within the transmembrane domain releases the beta-Alc-gamma chain in the extracellular milieu and produces an intracellular fragment (AlcICD). This processing is strongly suppressed in the tripartite complex formed with APBA2 and APP, which seems to prevent the association with PSEN1. In terms of tissue distribution, restricted to the brain. In the cerebral cortex, found in the somas and neuropil of all layers. Expressed at highest levels in neurons of cortical layers 5 and 6 and, at lower levels, in neurons of the upper layers. Highly expressed in Purkinje cells. Also found in a few scattered interneurons throughout the granule cell layer and occasionally in neurons in the molecular layer (at protein level). Present throughout all cortical layers, highest levels in GABAergic neurons (based on morphology and distribution pattern).

It localises to the postsynaptic cell membrane. The protein resides in the endoplasmic reticulum membrane. Its subcellular location is the golgi apparatus membrane. The protein localises to the cell projection. It is found in the dendrite. In terms of biological role, postsynaptic adhesion molecule that binds to presynaptic neurexins to mediate synapse formation, and which is involved in learning and memory. Promotes synapse development by acting as a cell adhesion molecule at the postsynaptic membrane, which associates with neurexin-alpha at the presynaptic membrane. The sequence is that of Calsyntenin-2 from Mus musculus (Mouse).